The following is a 252-amino-acid chain: Ribosomal RNA small subunit methyltransferase J (252 aa).

Residues 104 to 105 (RD), 120 to 121 (ER), 156 to 157 (SS), and Asp174 each bind S-adenosyl-L-methionine.

The protein belongs to the methyltransferase superfamily. RsmJ family.

The protein resides in the cytoplasm. It carries out the reaction guanosine(1516) in 16S rRNA + S-adenosyl-L-methionine = N(2)-methylguanosine(1516) in 16S rRNA + S-adenosyl-L-homocysteine + H(+). Its function is as follows. Specifically methylates the guanosine in position 1516 of 16S rRNA. In Yersinia enterocolitica serotype O:8 / biotype 1B (strain NCTC 13174 / 8081), this protein is Ribosomal RNA small subunit methyltransferase J.